Consider the following 460-residue polypeptide: A-type ATP synthase subunit B (460 aa).

It belongs to the ATPase alpha/beta chains family. Has multiple subunits, A(3), B(3), C, D, E, F, G, I and K(x); there may be a few other subunits as well.

Its subcellular location is the cell membrane. Functionally, component of the A-type ATP synthase that produces ATP from ADP in the presence of a proton gradient across the membrane. The B chain is a regulatory subunit. This chain is A-type ATP synthase subunit B, found in Methanosarcina mazei (strain ATCC BAA-159 / DSM 3647 / Goe1 / Go1 / JCM 11833 / OCM 88) (Methanosarcina frisia).